Here is a 217-residue protein sequence, read N- to C-terminus: Large ribosomal subunit protein uL3 (217 aa).

Belongs to the universal ribosomal protein uL3 family. Part of the 50S ribosomal subunit. Forms a cluster with proteins L14 and L19.

Functionally, one of the primary rRNA binding proteins, it binds directly near the 3'-end of the 23S rRNA, where it nucleates assembly of the 50S subunit. This chain is Large ribosomal subunit protein uL3, found in Mycobacterium marinum (strain ATCC BAA-535 / M).